Reading from the N-terminus, the 147-residue chain is MDRTLVLLKPDAVKRRLVGKIIERFEEKGLKIVAMKFMQMTKDQAKTHYSVHQNKPFFNDLVNYITSGPIVAMILEGAHAIEIVRLMSGATDGSKAQPGTIRGDYSMGIEKNIIHASDSLEAYNHEMPIFFSDNEIIEWAYGDEVIY.

6 residues coordinate ATP: K9, F57, R85, T91, R102, and N112. H115 acts as the Pros-phosphohistidine intermediate in catalysis.

Belongs to the NDK family. Mg(2+) is required as a cofactor.

The protein localises to the cytoplasm. The catalysed reaction is a 2'-deoxyribonucleoside 5'-diphosphate + ATP = a 2'-deoxyribonucleoside 5'-triphosphate + ADP. It carries out the reaction a ribonucleoside 5'-diphosphate + ATP = a ribonucleoside 5'-triphosphate + ADP. In terms of biological role, major role in the synthesis of nucleoside triphosphates other than ATP. The ATP gamma phosphate is transferred to the NDP beta phosphate via a ping-pong mechanism, using a phosphorylated active-site intermediate. The protein is Nucleoside diphosphate kinase of Thermoplasma volcanium (strain ATCC 51530 / DSM 4299 / JCM 9571 / NBRC 15438 / GSS1).